The following is a 53-amino-acid chain: uncharacterized protein (53 aa).

The protein resides in the mitochondrion. This is an uncharacterized protein from Saccharomyces cerevisiae (strain ATCC 204508 / S288c) (Baker's yeast).